Reading from the N-terminus, the 272-residue chain is Diaminopimelate epimerase (272 aa).

Substrate is bound by residues Asn-11 and Asn-60. The active-site Proton donor is Cys-69. Substrate is bound by residues 70–71, Asn-181, and 199–200; these read GN and ER. Cys-209 serves as the catalytic Proton acceptor. 210 to 211 contacts substrate; sequence GT.

This sequence belongs to the diaminopimelate epimerase family. In terms of assembly, homodimer.

It localises to the cytoplasm. It carries out the reaction (2S,6S)-2,6-diaminopimelate = meso-2,6-diaminopimelate. It participates in amino-acid biosynthesis; L-lysine biosynthesis via DAP pathway; DL-2,6-diaminopimelate from LL-2,6-diaminopimelate: step 1/1. Its function is as follows. Catalyzes the stereoinversion of LL-2,6-diaminopimelate (L,L-DAP) to meso-diaminopimelate (meso-DAP), a precursor of L-lysine and an essential component of the bacterial peptidoglycan. The polypeptide is Diaminopimelate epimerase (Helicobacter pylori (strain P12)).